The chain runs to 163 residues: 3-isopropylmalate dehydratase small subunit 2 (163 aa).

This sequence belongs to the LeuD family. LeuD type 2 subfamily. In terms of assembly, heterodimer of LeuC and LeuD.

It catalyses the reaction (2R,3S)-3-isopropylmalate = (2S)-2-isopropylmalate. Its pathway is amino-acid biosynthesis; L-leucine biosynthesis; L-leucine from 3-methyl-2-oxobutanoate: step 2/4. Catalyzes the isomerization between 2-isopropylmalate and 3-isopropylmalate, via the formation of 2-isopropylmaleate. In Pyrococcus abyssi (strain GE5 / Orsay), this protein is 3-isopropylmalate dehydratase small subunit 2 (leuD2).